A 153-amino-acid polypeptide reads, in one-letter code: uncharacterized protein (153 aa).

Disordered stretches follow at residues 30–66 (GPTV…RKGD) and 79–153 (IKEN…DYDD). Residues 45-56 (EDSDGSDKEDEQ) are compositionally biased toward acidic residues. Composition is skewed to polar residues over residues 106 to 116 (GDTTSGVNACS) and 130 to 144 (GTKS…SSLL).

This is an uncharacterized protein from Xenopus laevis (African clawed frog).